The primary structure comprises 317 residues: MIREKTNKISIIGAGFVGSTTAFALMQDGLASEIVIVDINKDKAHAEAMDLAQGAAFVKSVDIKSGDYADTKDSDIVIITAGVGPKPGETRLDIINKNLKIFKSIVPEVVKYSPNSILLVVSNPVDILTYITYKLSGFPKERVVGSGTVLDTSRLKYMLSEHFDIDARNVHTYIIGEHGDSEITAWSLTNIAGANVDEYCKTVCANCDGSFKKELPEKVKNAAYEIINSKGYTNYAVALAVTRIVEAILRDENAILTVSSLFEGQYGIDNVYLAMPTIVDRSGARQILDVPISNEEKENLIKSAEILKGHIANSELD.

NAD(+) contacts are provided by residues Val-17, Asp-38, Lys-43, Tyr-68, and 82-83 (GV). Arg-91 lines the substrate pocket. Residues Ser-104, 121 to 123 (VSN), and Ser-146 contribute to the NAD(+) site. Residue 123–126 (NPVD) participates in substrate binding. 151–154 (DTSR) provides a ligand contact to substrate. 2 residues coordinate beta-D-fructose 1,6-bisphosphate: Lys-156 and His-171. His-178 functions as the Proton acceptor in the catalytic mechanism. A Phosphotyrosine modification is found at Tyr-224. Thr-233 lines the substrate pocket.

Belongs to the LDH/MDH superfamily. LDH family. Homotetramer.

It is found in the cytoplasm. It catalyses the reaction (S)-lactate + NAD(+) = pyruvate + NADH + H(+). It functions in the pathway fermentation; pyruvate fermentation to lactate; (S)-lactate from pyruvate: step 1/1. Allosterically activated by fructose 1,6-bisphosphate (FBP). Catalyzes the conversion of lactate to pyruvate. The sequence is that of L-lactate dehydrogenase from Clostridium perfringens (strain SM101 / Type A).